A 738-amino-acid chain; its full sequence is YTH domain-containing protein 1 (738 aa).

Basic and acidic residues predominate over residues 1–12 (MAADSREEKDGE). Positions 1 to 341 (MAADSREEKD…KHEKLSSSVR (341 aa)) are disordered. Position 35 is a phosphoserine (Ser-35). The span at 50–59 (ERMESIDTKR) shows a compositional bias: basic and acidic residues. The span at 63 to 90 (SIHSRQLISKPLSSSVSNNKRIVSTKGK) shows a compositional bias: polar residues. Residues 91 to 115 (SVTEYKNEEYQRSERNKRLDADRKI) show a composition bias toward basic and acidic residues. Residue Lys-96 forms a Glycyl lysine isopeptide (Lys-Gly) (interchain with G-Cter in SUMO2) linkage. 2 positions are modified to phosphoserine: Ser-118 and Ser-120. The span at 124–144 (EPYKSQPEKPCLRKRDSERRA) shows a compositional bias: basic and acidic residues. Ser-146 is subject to Phosphoserine. Residue Thr-148 is modified to Phosphothreonine. Composition is skewed to basic and acidic residues over residues 151–163 (GSERIGLEVDRRA) and 170–185 (SKEEGNSEEYGSDHET). The segment covering 186–197 (GSSASSEQGNNT) has biased composition (polar residues). Positions 198–257 (ENEEEGGEEDVEEDEEVDEDGDDDEEVDEDAEEEEDEEEDEEEEDEEEEEEEEEEYEQDE) are enriched in acidic residues. Over residues 258–273 (RDQKEEGNDYDTRSEA) the composition is skewed to basic and acidic residues. Over residues 283-292 (FTDGSVRSGS) the composition is skewed to polar residues. 5 positions are modified to phosphoserine: Ser-311, Ser-318, Ser-320, Ser-321, and Ser-323. Residues 318–328 (SGSSASESYAG) show a composition bias toward low complexity. The YTH domain occupies 358-495 (ARFFLIKSNN…ECGTQLCLLF (138 aa)). RNA contacts are provided by residues 364–366 (KSN) and Trp-380. Residue Ser-427 is modified to Phosphoserine. An RNA-binding site is contributed by Trp-431. Position 438 is a phosphoserine (Ser-438). Asp-479 contacts RNA. Positions 512–526 (HKRRMHSQPRSRGRP) are enriched in basic residues. Disordered regions lie at residues 512-566 (HKRR…RPGY), 618-654 (GMPPYPGIEQPPHHPYYQHHAPPPQAHPPYSGHHPVP), and 680-738 (AVVS…RYRR). Positions 527–566 (SRREPVRDVGRRRPEDYDIHNSRKKPRIDYPPEFHQRPGY) are enriched in basic and acidic residues. Ser-548 carries the phosphoserine modification. Residues 690–738 (RERDRERERDRPRDNRRDRERDRGRDRERERERICDRDRDRGERGRYRR) show a composition bias toward basic and acidic residues.

Interacts with SRSF1. Interacts with SRSF2. Interacts with SRSF3. Interacts with SRSF7. Interacts with SRSF10. Interacts with CPSF6. Interacts with KHDRBS1/SAM68. Interacts with TRA2B. Interacts with KHDRBS3. Interacts with EMD. Interacts with RBMX. Interacts with ZCCHC8. Post-translationally, tyrosine phosphorylated. Ubiquitous.

The protein localises to the nucleus. It localises to the nucleus speckle. Its function is as follows. Regulator of alternative splicing that specifically recognizes and binds N6-methyladenosine (m6A)-containing RNAs. M6A is a modification present at internal sites of mRNAs and some non-coding RNAs and plays a role in the efficiency of mRNA splicing, processing and stability. Acts as a key regulator of exon-inclusion or exon-skipping during alternative splicing via interaction with mRNA splicing factors SRSF3 and SRSF10. Specifically binds m6A-containing mRNAs and promotes recruitment of SRSF3 to its mRNA-binding elements adjacent to m6A sites, leading to exon-inclusion during alternative splicing. In contrast, interaction with SRSF3 prevents interaction with SRSF10, a splicing factor that promotes exon skipping: this prevents SRSF10 from binding to its mRNA-binding sites close to m6A-containing regions, leading to inhibit exon skipping during alternative splicing. May also regulate alternative splice site selection. Also involved in nuclear export of m6A-containing mRNAs via interaction with SRSF3: interaction with SRSF3 facilitates m6A-containing mRNA-binding to both SRSF3 and NXF1, promoting mRNA nuclear export. Involved in S-adenosyl-L-methionine homeostasis by regulating expression of MAT2A transcripts, probably by binding m6A-containing MAT2A mRNAs. Also recognizes and binds m6A on other RNA molecules. Involved in random X inactivation mediated by Xist RNA: recognizes and binds m6A-containing Xist and promotes transcription repression activity of Xist. Also recognizes and binds m6A-containing single-stranded DNA. Involved in germline development: required for spermatogonial development in males and oocyte growth and maturation in females, probably via its role in alternative splicing. The polypeptide is YTH domain-containing protein 1 (Ythdc1) (Rattus norvegicus (Rat)).